The chain runs to 230 residues: Ribosome maturation factor RimM (230 aa).

The 82-residue stretch at 149–230 (ADEFYWVDLI…RVVVDWEADY (82 aa)) folds into the PRC barrel domain.

Belongs to the RimM family. As to quaternary structure, binds ribosomal protein uS19.

The protein localises to the cytoplasm. In terms of biological role, an accessory protein needed during the final step in the assembly of 30S ribosomal subunit, possibly for assembly of the head region. Essential for efficient processing of 16S rRNA. May be needed both before and after RbfA during the maturation of 16S rRNA. It has affinity for free ribosomal 30S subunits but not for 70S ribosomes. The protein is Ribosome maturation factor RimM of Burkholderia mallei (strain NCTC 10229).